Consider the following 206-residue polypeptide: Two-component response regulator ARR15 (206 aa).

Residues 19–146 form the Response regulatory domain; it reads HVLAVDDSFV…DVKRLKELIM (128 aa). Residue aspartate 79 is modified to 4-aspartylphosphate. A disordered region spans residues 151 to 206; that stretch reads AEEGKTKKLSPKRILQNDIDSSPSSSSTSSSSSSHDVSSLDDDTPSSKRIKLESRG. Positions 168–187 are enriched in low complexity; sequence DIDSSPSSSSTSSSSSSHDV.

Belongs to the ARR family. Type-A subfamily. Two-component system major event consists of a His-to-Asp phosphorelay between a sensor histidine kinase (HK) and a response regulator (RR). In plants, the His-to-Asp phosphorelay involves an additional intermediate named Histidine-containing phosphotransfer protein (HPt). This multistep phosphorelay consists of a His-Asp-His-Asp sequential transfer of a phosphate group between first a His and an Asp of the HK protein, followed by the transfer to a conserved His of the HPt protein and finally the transfer to an Asp in the receiver domain of the RR protein.

It localises to the nucleus. Functionally, functions as a response regulator involved in His-to-Asp phosphorelay signal transduction system. Phosphorylation of the Asp residue in the receiver domain activates the ability of the protein to promote the transcription of target genes. Type-A response regulators seem to act as negative regulators of the cytokinin signaling. The chain is Two-component response regulator ARR15 (ARR15) from Arabidopsis thaliana (Mouse-ear cress).